A 235-amino-acid polypeptide reads, in one-letter code: Endonuclease V (235 aa).

Positions 47 and 115 each coordinate Mg(2+).

Belongs to the endonuclease V family. The cofactor is Mg(2+).

The protein localises to the cytoplasm. It catalyses the reaction Endonucleolytic cleavage at apurinic or apyrimidinic sites to products with a 5'-phosphate.. In terms of biological role, DNA repair enzyme involved in the repair of deaminated bases. Selectively cleaves double-stranded DNA at the second phosphodiester bond 3' to a deoxyinosine leaving behind the intact lesion on the nicked DNA. The polypeptide is Endonuclease V (Myxococcus xanthus (strain DK1622)).